A 361-amino-acid chain; its full sequence is Ornithine carbamoyltransferase, mitochondrial (361 aa).

A mitochondrion-targeting transit peptide spans 1-24 (MIPTARCGALRQKIPVQAVRQYSS). Residues 89–92 (STRT), Arg140, His167, and Gln170 contribute to the carbamoyl phosphate site. Residues Asn207, Asp273, Ser277, and Met278 each contribute to the L-ornithine site. The active-site Proton acceptor is Cys315. Carbamoyl phosphate contacts are provided by residues 315 to 316 (CL) and Arg342.

This sequence belongs to the aspartate/ornithine carbamoyltransferase superfamily. OTCase family. As to quaternary structure, homotrimer.

The protein localises to the mitochondrion matrix. The enzyme catalyses carbamoyl phosphate + L-ornithine = L-citrulline + phosphate + H(+). The protein operates within amino-acid biosynthesis; L-arginine biosynthesis; L-arginine from L-ornithine and carbamoyl phosphate: step 1/3. The chain is Ornithine carbamoyltransferase, mitochondrial (arg1) from Aspergillus terreus.